Consider the following 111-residue polypeptide: UPF0145 protein BRADO6695 (111 aa).

It belongs to the UPF0145 family.

The sequence is that of UPF0145 protein BRADO6695 from Bradyrhizobium sp. (strain ORS 278).